The chain runs to 266 residues: Thymidylate synthase (266 aa).

Residues R20 and 129–130 (RR) each bind dUMP. C149 (nucleophile) is an active-site residue. DUMP-binding positions include 169–172 (RSCD), N180, and 210–212 (HVY). D172 serves as a coordination point for (6R)-5,10-methylene-5,6,7,8-tetrahydrofolate. A265 is a (6R)-5,10-methylene-5,6,7,8-tetrahydrofolate binding site.

It belongs to the thymidylate synthase family. Bacterial-type ThyA subfamily. Homodimer.

The protein resides in the cytoplasm. It catalyses the reaction dUMP + (6R)-5,10-methylene-5,6,7,8-tetrahydrofolate = 7,8-dihydrofolate + dTMP. The protein operates within pyrimidine metabolism; dTTP biosynthesis. Its function is as follows. Catalyzes the reductive methylation of 2'-deoxyuridine-5'-monophosphate (dUMP) to 2'-deoxythymidine-5'-monophosphate (dTMP) while utilizing 5,10-methylenetetrahydrofolate (mTHF) as the methyl donor and reductant in the reaction, yielding dihydrofolate (DHF) as a by-product. This enzymatic reaction provides an intracellular de novo source of dTMP, an essential precursor for DNA biosynthesis. This chain is Thymidylate synthase, found in Bifidobacterium longum (strain NCC 2705).